Consider the following 387-residue polypeptide: Cobalt-precorrin-5B C(1)-methyltransferase (387 aa).

The protein belongs to the CbiD family.

It carries out the reaction Co-precorrin-5B + S-adenosyl-L-methionine = Co-precorrin-6A + S-adenosyl-L-homocysteine. The protein operates within cofactor biosynthesis; adenosylcobalamin biosynthesis; cob(II)yrinate a,c-diamide from sirohydrochlorin (anaerobic route): step 6/10. Functionally, catalyzes the methylation of C-1 in cobalt-precorrin-5B to form cobalt-precorrin-6A. This chain is Cobalt-precorrin-5B C(1)-methyltransferase, found in Desulfitobacterium hafniense (strain Y51).